The chain runs to 627 residues: MPIRILPPILANQIAAGEVVERPSSVVKELVENSLDAGADRVEIDIDKGGAKLIRIRDNGCGVAKDELVLALSRHATSKVATLDDLEGICSLGFRGEALASISSVSRLTFTSRTQDQSEAWQAQAEGREMNVTVKPAAHPVGTTVEVVDLFFNTPARRKFMRSEKTEFAHIDELVRRIALSRFDVTLILRHNGKVMRQYKAANTVAEQERRLAAVCGTPFMHHALAVESEHSDVRLWGWLALPEGARPQNDLQYTYVNGRMMRDKLINHAIRQAYDELLPTDRFAAYVLYIELDPHQVDVNVHPAKHEVRFHQARLIHDFIFQALFTALRREGVSAAHQEEPLAETLVELPVSGQIEYPGQAPRPEWYGAEHSYRAPASTNEVREGSAARAGNYQPPEPPSREAMRSMGALLTTLPGAGPASAASATAAMVPSAAAQTAPGVWQALTLVEQAYLLLVRDGQLALLSLVRAERLLLRNWLLEAWGQGLAAQPLLLPVSFKLPKNLIALVEAQERLLKRMGLELKSGGRDTMILTRVPALLRQTDLVRLLPELLQIIESGSDSDASQLAEVLCQWLVEQGISHEKIYDFSTANRLLTELVADFSDQLADIRMVRPVSLTTVLEAFAHDG.

A disordered region spans residues 376-404; that stretch reads APASTNEVREGSAARAGNYQPPEPPSREA.

It belongs to the DNA mismatch repair MutL/HexB family.

Its function is as follows. This protein is involved in the repair of mismatches in DNA. It is required for dam-dependent methyl-directed DNA mismatch repair. May act as a 'molecular matchmaker', a protein that promotes the formation of a stable complex between two or more DNA-binding proteins in an ATP-dependent manner without itself being part of a final effector complex. This chain is DNA mismatch repair protein MutL, found in Aeromonas salmonicida (strain A449).